The chain runs to 359 residues: Methylthioribose-1-phosphate isomerase (359 aa).

Residues 52–54 (RGA), R90, and Q200 contribute to the substrate site. D241 serves as the catalytic Proton donor. 251–252 (NK) contacts substrate.

The protein belongs to the eIF-2B alpha/beta/delta subunits family. MtnA subfamily.

The catalysed reaction is 5-(methylsulfanyl)-alpha-D-ribose 1-phosphate = 5-(methylsulfanyl)-D-ribulose 1-phosphate. The protein operates within amino-acid biosynthesis; L-methionine biosynthesis via salvage pathway; L-methionine from S-methyl-5-thio-alpha-D-ribose 1-phosphate: step 1/6. Functionally, catalyzes the interconversion of methylthioribose-1-phosphate (MTR-1-P) into methylthioribulose-1-phosphate (MTRu-1-P). This chain is Methylthioribose-1-phosphate isomerase, found in Sulfurimonas denitrificans (strain ATCC 33889 / DSM 1251) (Thiomicrospira denitrificans (strain ATCC 33889 / DSM 1251)).